Here is a 555-residue protein sequence, read N- to C-terminus: Esterase-5A (555 aa).

Positions Met1–Ala19 are cleaved as a signal peptide. Cys87 and Cys106 are disulfide-bonded. N-linked (GlcNAc...) asparagine glycosylation is found at Asn95 and Asn116. Ser210 acts as the Acyl-ester intermediate in catalysis. Cys262 and Cys274 are oxidised to a cystine. Asn479 and Asn510 each carry an N-linked (GlcNAc...) asparagine glycan. A disulfide bridge connects residues Cys518 and Cys539.

This sequence belongs to the type-B carboxylesterase/lipase family.

It localises to the secreted. The catalysed reaction is a carboxylic ester + H2O = an alcohol + a carboxylate + H(+). The protein is Esterase-5A (Est-5A) of Drosophila miranda (Fruit fly).